Here is a 228-residue protein sequence, read N- to C-terminus: Ribosomal RNA small subunit methyltransferase G (228 aa).

S-adenosyl-L-methionine-binding positions include G89, L94, 140 to 141 (VE), and R159.

It belongs to the methyltransferase superfamily. RNA methyltransferase RsmG family.

Its subcellular location is the cytoplasm. The catalysed reaction is guanosine(527) in 16S rRNA + S-adenosyl-L-methionine = N(7)-methylguanosine(527) in 16S rRNA + S-adenosyl-L-homocysteine. Specifically methylates the N7 position of guanine in position 527 of 16S rRNA. In Burkholderia cenocepacia (strain HI2424), this protein is Ribosomal RNA small subunit methyltransferase G.